Consider the following 216-residue polypeptide: MRTRYKNTYKEFLGACFLGSVTLLSISLWNIINQAGKNHSYKAFIEFDSAYGIQEGTAVRLRGLPVGKVVGISQSSNSILTSIEIKSSSTIIPKTSLIETNQTGLLNDTVIDIIPLSKLSIDYSSIKAGPLSGACDNSQIICNLNYLKGERGLNYDDLIRATTRISQRFDDPKLFYGLYYLIGNMIKLSNNFVDLTEQIAYMSLFIRLQLENLKEQ.

The protein resides in the plastid. The protein localises to the chloroplast. This is an uncharacterized protein from Pyropia yezoensis (Susabi-nori).